The following is a 395-amino-acid chain: Transcription termination/antitermination protein NusA (395 aa).

Residues 137 to 201 (NSVLMGQVIL…TKKGLLLELS (65 aa)) form the S1 motif domain. 2 KH domains span residues 243–291 (SHNS…TLAL) and 331–378 (KVRL…NENE).

The protein belongs to the NusA family. As to quaternary structure, monomer. Binds directly to the core enzyme of the DNA-dependent RNA polymerase and to nascent RNA.

The protein resides in the cytoplasm. In terms of biological role, participates in both transcription termination and antitermination. This is Transcription termination/antitermination protein NusA from Helicobacter pylori (strain J99 / ATCC 700824) (Campylobacter pylori J99).